We begin with the raw amino-acid sequence, 214 residues long: Adenylate kinase (214 aa).

10 to 15 serves as a coordination point for ATP; that stretch reads GAGKGT. An NMP region spans residues 30-59; it reads STGDLLREEIANNTELGKQAKKLIDGGNLV. AMP-binding positions include Thr31, Arg36, 57 to 59, 83 to 86, and Gln90; these read NLV and GFPR. Residues 124 to 161 are LID; sequence LRRQCKNCGNIFNLRFIKNFDGKCPKCGSTDIYQRADD. ATP is bound at residue Arg125. Residues Cys128 and Cys131 each coordinate Zn(2+). 134 to 135 is a binding site for ATP; the sequence is IF. The Zn(2+) site is built by Cys147 and Cys150. AMP-binding residues include Arg158 and Arg169. Lys197 contributes to the ATP binding site.

The protein belongs to the adenylate kinase family. In terms of assembly, monomer.

It localises to the cytoplasm. It carries out the reaction AMP + ATP = 2 ADP. The protein operates within purine metabolism; AMP biosynthesis via salvage pathway; AMP from ADP: step 1/1. Its function is as follows. Catalyzes the reversible transfer of the terminal phosphate group between ATP and AMP. Plays an important role in cellular energy homeostasis and in adenine nucleotide metabolism. The sequence is that of Adenylate kinase from Elusimicrobium minutum (strain Pei191).